A 29-amino-acid polypeptide reads, in one-letter code: U-homostoxin-Hdu1a (29 aa).

The O-linked (GlcNAc...) threonine glycan is linked to T1. 2 disulfide bridges follow: C7-C19 and C10-C25.

It belongs to the sea anemone BBH family.

The protein localises to the secreted. It is found in the nematocyst. This Homostichanthus duerdeni (Sea anemone) protein is U-homostoxin-Hdu1a.